A 296-amino-acid polypeptide reads, in one-letter code: NAD kinase (296 aa).

Residue Asp72 is the Proton acceptor of the active site. NAD(+) contacts are provided by residues 72-73 (DG), 146-147 (ND), Arg157, Lys174, Asp176, 187-192 (TAYALS), and Gln247.

This sequence belongs to the NAD kinase family. Requires a divalent metal cation as cofactor.

Its subcellular location is the cytoplasm. It catalyses the reaction NAD(+) + ATP = ADP + NADP(+) + H(+). Functionally, involved in the regulation of the intracellular balance of NAD and NADP, and is a key enzyme in the biosynthesis of NADP. Catalyzes specifically the phosphorylation on 2'-hydroxyl of the adenosine moiety of NAD to yield NADP. In Pseudomonas syringae pv. syringae (strain B728a), this protein is NAD kinase.